The chain runs to 242 residues: uncharacterized protein (242 aa).

To E.coli MazG and to plasmid pIP1100 erythromycin esterase.

This is an uncharacterized protein from Streptomyces cacaoi.